Consider the following 606-residue polypeptide: Probable methyltransferase PMT5 (606 aa).

At 1 to 20 (MRGSWYKSVSSVFGLRPRIR) the chain is on the cytoplasmic side. The helical; Signal-anchor for type II membrane protein transmembrane segment at 21–41 (GLLFFIVGVVALVTILAPLTS) threads the bilayer. The Lumenal portion of the chain corresponds to 42–606 (NSYDSSSSST…LVCQKPFIKK (565 aa)). N-linked (GlcNAc...) asparagine glycosylation is found at N101 and N409.

It belongs to the methyltransferase superfamily.

The protein localises to the endoplasmic reticulum membrane. In Arabidopsis thaliana (Mouse-ear cress), this protein is Probable methyltransferase PMT5.